The following is a 215-amino-acid chain: Pyrrolidone-carboxylate peptidase (215 aa).

Catalysis depends on residues Glu80, Cys143, and His167.

The protein belongs to the peptidase C15 family. In terms of assembly, homotetramer.

The protein resides in the cytoplasm. It carries out the reaction Release of an N-terminal pyroglutamyl group from a polypeptide, the second amino acid generally not being Pro.. Its function is as follows. Removes 5-oxoproline from various penultimate amino acid residues except L-proline. In Bacillus cereus (strain AH820), this protein is Pyrrolidone-carboxylate peptidase.